The primary structure comprises 150 residues: Transcriptional regulator MraZ (150 aa).

2 SpoVT-AbrB domains span residues 7-58 (KEQH…EPEI) and 87-130 (LDSV…SPEK).

The protein belongs to the MraZ family. In terms of assembly, forms oligomers.

Its subcellular location is the cytoplasm. It localises to the nucleoid. The protein is Transcriptional regulator MraZ of Chlorobium phaeobacteroides (strain BS1).